The chain runs to 358 residues: MRVLAAMSGGVDSSVAAARMVDAGHDVVGVHLALSTAPGTLRTGSRGCCSKEDASDARRVADVLGIPFYVWDFAEKFQADVIDEFLSAYARGETPNPCVTCNQKIKFSALSAKAVALGFDAVATGHYARLSGGRLRRAVDKDKDQSYVLAVLSAEQLRHAAFPIGDTPKPQIREEAARRGLAVAEKPDSHDICFIPSGNTRAFLGERIGVRRGAVVDADGTVLAEHDGVHGFTIGQRKGLGIAGPGPDGRPRYVTAIDADTATVRVGEASDLDVREMLGRAVVFTSGTAPSGPFECAVQVRAHGETADAVAELVGDELVVRLRAPLRGVAPGQTLALYRRDPDGDEVLGSATIAGTSR.

Residues 6–13 (AMSGGVDS) and Leu-32 each bind ATP. Residue Cys-101 is the Nucleophile of the active site. The cysteines at positions 101 and 193 are disulfide-linked. Residue Gly-125 coordinates ATP. Positions 143–145 (KDQ) are interaction with tRNA. The active-site Cysteine persulfide intermediate is the Cys-193.

It belongs to the MnmA/TRMU family.

It localises to the cytoplasm. It carries out the reaction S-sulfanyl-L-cysteinyl-[protein] + uridine(34) in tRNA + AH2 + ATP = 2-thiouridine(34) in tRNA + L-cysteinyl-[protein] + A + AMP + diphosphate + H(+). In terms of biological role, catalyzes the 2-thiolation of uridine at the wobble position (U34) of tRNA, leading to the formation of s(2)U34. This chain is tRNA-specific 2-thiouridylase MnmA, found in Mycolicibacterium paratuberculosis (strain ATCC BAA-968 / K-10) (Mycobacterium paratuberculosis).